We begin with the raw amino-acid sequence, 724 residues long: Small conductance calcium-activated potassium channel protein 3 (724 aa).

Over residues 1–11 the composition is skewed to basic and acidic residues; that stretch reads MDTSGHFHDSG. Disordered stretches follow at residues 1-161 and 232-251; these read MDTS…RDSN and ATHN…FPKA. Over residues 34-58 the composition is skewed to pro residues; that stretch reads QPPPPPPPPAPPAAPQQPPGPPLQP. The segment covering 59-88 has biased composition (low complexity); sequence QPLQLQQQQQQQQQQPPHPLSQLAQLQSQP. Polar residues predominate over residues 105-125; it reads PSSNSTAILHPSSRQGSQLNL. Low complexity predominate over residues 131–140; it reads GHSPSSTATS. Serine 160 is modified (phosphoserine). The span at 232–249 shows a compositional bias: polar residues; that stretch reads ATHNHQHAGTTASSTTFP. Residues 281 to 301 traverse the membrane as a helical segment; that stretch reads LIFGMFGIVVMVIETELSWGL. The helical transmembrane segment at 308 to 328 threads the bilayer; the sequence is FSLALKCLISLSTIILLGLII. The chain crosses the membrane as a helical span at residues 359-379; the sequence is ISLEMLVCAIHPIPGEYKFFW. Residues 398–418 form a helical membrane-spanning segment; sequence IILSIPMFLRLYLIARVMLLH. A helical transmembrane segment spans residues 447–467; the sequence is LMTICPGTVLLVFSISLWIIA. Positions 487 to 507 form an intramembrane region, pore-forming; sequence FLGAMWLISITFLSIGYGDMV. Residues 516 to 536 form a helical membrane-spanning segment; sequence VCLLTGIMGAGCTALVVAVVA. The calmodulin-binding stretch occupies residues 554–630; it reads DTQLTKRIKN…LVDLSKMQNV (77 aa). Positions 635 to 662 form a coiled coil; it reads ITELNDRSEDLEKQIGSLESKLEHLTAS. The disordered stretch occupies residues 702–724; it reads LSDSPIGVSSTSFPTPYTSSSSC. Positions 710 to 724 are enriched in low complexity; that stretch reads SSTSFPTPYTSSSSC.

This sequence belongs to the potassium channel KCNN family. KCa2.3/KCNN3 subfamily. Homodimer. Heteromultimer with KCNN2 or KCNN1; this modulates plasma membrane expression and consequently the small conductance calcium-activated potassium channel activity. The complex is composed of 4 channel subunits each of which binds to a calmodulin subunit which regulates the channel activity through calcium-binding. Interacts with CALM1.

The protein resides in the cell membrane. Its subcellular location is the cytoplasm. It localises to the myofibril. It is found in the sarcomere. The protein localises to the z line. The enzyme catalyses K(+)(in) = K(+)(out). Its activity is regulated as follows. Inhibited by bee venom neurotoxin apamin. In terms of biological role, small conductance calcium-activated potassium channel that mediates the voltage-independent transmembrane transfer of potassium across the cell membrane through a constitutive interaction with calmodulin which binds the intracellular calcium allowing its opening. The current is characterized by a voltage-independent activation, an intracellular calcium concentration increase-dependent activation and a single-channel conductance of 10 picosiemens. Also presents an inwardly rectifying current, thus reducing its already small outward conductance of potassium ions, which is particularly the case when the membrane potential displays positive values, above + 20 mV. Activation is followed by membrane hyperpolarization. Thought to regulate neuronal excitability by contributing to the slow component of synaptic afterhyperpolarization. This chain is Small conductance calcium-activated potassium channel protein 3, found in Sus scrofa (Pig).